The sequence spans 236 residues: MEVFPAVDILSGNCVQLVGGDRLTATVYGSPMDNARRWISEGASNLHVVNLDGAFTASTTNAEMIREVVEKTDVFVQVGGGIRSLEDARGWLNCGVARIILSTFATREPAVIRTLSKEFGSERIMAGVDARRGEIAVSGWQELAGDFIVWAQKFEELGAGSLLYTNVDVEGQQAGIDIEPVQKLLDAVDIPVIVAGGVTTSQDVTALKQLGASGCVLGSALYSGRITLKEALEAAV.

The active-site Proton acceptor is the D8. D129 serves as the catalytic Proton donor.

Belongs to the HisA/HisF family.

The protein localises to the cytoplasm. The enzyme catalyses 1-(5-phospho-beta-D-ribosyl)-5-[(5-phospho-beta-D-ribosylamino)methylideneamino]imidazole-4-carboxamide = 5-[(5-phospho-1-deoxy-D-ribulos-1-ylimino)methylamino]-1-(5-phospho-beta-D-ribosyl)imidazole-4-carboxamide. The protein operates within amino-acid biosynthesis; L-histidine biosynthesis; L-histidine from 5-phospho-alpha-D-ribose 1-diphosphate: step 4/9. In Methanocorpusculum labreanum (strain ATCC 43576 / DSM 4855 / Z), this protein is 1-(5-phosphoribosyl)-5-[(5-phosphoribosylamino)methylideneamino] imidazole-4-carboxamide isomerase.